Here is a 521-residue protein sequence, read N- to C-terminus: Bifunctional purine biosynthesis protein PurH (521 aa).

In terms of domain architecture, MGS-like spans 1–145 (MIKQALISVS…KNHKDVIVIC (145 aa)).

It belongs to the PurH family.

The catalysed reaction is (6R)-10-formyltetrahydrofolate + 5-amino-1-(5-phospho-beta-D-ribosyl)imidazole-4-carboxamide = 5-formamido-1-(5-phospho-D-ribosyl)imidazole-4-carboxamide + (6S)-5,6,7,8-tetrahydrofolate. It carries out the reaction IMP + H2O = 5-formamido-1-(5-phospho-D-ribosyl)imidazole-4-carboxamide. It functions in the pathway purine metabolism; IMP biosynthesis via de novo pathway; 5-formamido-1-(5-phospho-D-ribosyl)imidazole-4-carboxamide from 5-amino-1-(5-phospho-D-ribosyl)imidazole-4-carboxamide (10-formyl THF route): step 1/1. The protein operates within purine metabolism; IMP biosynthesis via de novo pathway; IMP from 5-formamido-1-(5-phospho-D-ribosyl)imidazole-4-carboxamide: step 1/1. The chain is Bifunctional purine biosynthesis protein PurH from Herminiimonas arsenicoxydans.